Consider the following 522-residue polypeptide: MSEIWEDAIKSNAWPFVEAKKILDSLNGQIPEKGYVLFETGYGPSGLPHIGTFGENARMVMVQKAFEQLSDIPTKLICFSDDMDGLRKVPSNIPNPEMVAQYMDMPLTSIPDTFGECESYGHYMNAKLRSFLDKFGFEYEFYSSTNCYKAGMFDEMLIMVLEKYDEIMELMLPTFREERKATYSPFMPICPKTGKVLQVPIEKWDAKAGTVTYKDKAGNYIEVPVTGGHCKLQWKPDFGMRWAALKVDYEMYGKDHLANARLYSEICRILGGKPPVQLCYELFLDENGEKISKSKGNSISIDDWLKYAPVESMALFMYQNPTRAKRLFFDVIPKNVDEYITFNQKYHLEEDRAKRVANPVYHIHHGNVPKIETFGITYSLLLNLTSVCNPSDKSVLWGFISKYEPQATPNTNPYLDHLAEFAIRYYNDFIKAHKSYLSPSEKHKVILQDILDMLSDIADQTEAEAIQKAIYDIGMKAGYANLRDYFKDLYQILLGQNEGPRLGTFIKLYGVQEMKKLVEGQL.

The 'HIGH' region signature appears at 44–52 (PSGLPHIGT). The 'KMSKS' region signature appears at 290 to 294 (KISKS). Lys-293 lines the ATP pocket.

The protein belongs to the class-I aminoacyl-tRNA synthetase family.

The protein resides in the cytoplasm. The enzyme catalyses tRNA(Lys) + L-lysine + ATP = L-lysyl-tRNA(Lys) + AMP + diphosphate. This Rickettsia rickettsii (strain Iowa) protein is Lysine--tRNA ligase.